The chain runs to 322 residues: MSVARIAYLGPEGTFTEAALLRMTAAGLVPDTGPDGLRRWPTESTPAALDAVRGGAADYACVPIENSIDGSVAPTLDNLAIGSPLQVFAETTLDVEFNIVVKPGITAADIRTLAAFPVAAAQVRQWLAAHLAGAELRPAYSNADAARQVAYGQVDAAVTSPLAATRWGLIALAAGIVDEPNARTRFVLVGMPGPPPARTGTDRTSAVLRIDNAPGMLVAALAEFGIRGIDLTRIESRPTRTELGTYLFFVDCVGHIDDGVVAEALKALHRRCADVCYLGSWPAGLATGPTVSPPPPDEASRWLARLRAGKPDQASEPGGGKL.

Residues 5-191 enclose the Prephenate dehydratase domain; sequence RIAYLGPEGT…ARTRFVLVGM (187 aa). In terms of domain architecture, ACT spans 205-282; sequence SAVLRIDNAP…ADVCYLGSWP (78 aa). Residues 286 to 322 form a disordered region; it reads ATGPTVSPPPPDEASRWLARLRAGKPDQASEPGGGKL.

As to quaternary structure, homodimer.

The catalysed reaction is prephenate + H(+) = 3-phenylpyruvate + CO2 + H2O. It functions in the pathway amino-acid biosynthesis; L-phenylalanine biosynthesis; phenylpyruvate from prephenate: step 1/1. This chain is Prephenate dehydratase (pheA), found in Mycobacterium leprae (strain Br4923).